Here is a 402-residue protein sequence, read N- to C-terminus: MGVVELGTNSEVGALRVVILHRPGGELLRLNPRNVDQLLFDGLPWVARAQEEHDQFAELLRSRGVEVLLLSDLLTEALTHSGAARMQGVAAAVDARRLGVPLAQELSAYLRGLEPARLAQVLMAGMTFNELPADTRTDVSLVLRMHHGGDFVIDPLPNLVFTRDSSIWIGPRVVIPTLALRARVREASLTDLIYAHHPRFTGVRRAYESRTAPVEGGDVLLLAPGVVAVGVGERTTPAGAEALARSLFDDDLAHTVLAVPIAQRRAQMHLDTVCTMVDTDTVVMYANVVDALSAFTIQRTPSGVEISEAPFLEAAATAMGIDKLRVIDTGLDPVIAEREQWDDGNNTLALSPGVVVAYERNAQTNMRLQEAGIEVLTIAGSELGTGRGGPRCMSCPVARDPL.

Catalysis depends on Cys-392, which acts as the Amidino-cysteine intermediate.

Belongs to the arginine deiminase family.

Its subcellular location is the cytoplasm. It carries out the reaction L-arginine + H2O = L-citrulline + NH4(+). It participates in amino-acid degradation; L-arginine degradation via ADI pathway; carbamoyl phosphate from L-arginine: step 1/2. This chain is Arginine deiminase, found in Mycobacterium avium (strain 104).